Reading from the N-terminus, the 307-residue chain is High-affinity branched-chain amino acid transport system permease protein BraD (307 aa).

10 consecutive transmembrane segments (helical) span residues 21–41, 45–65, 70–90, 104–124, 132–152, 154–174, 203–223, 224–244, 245–265, and 280–300; these read YALI…INFA, VYMI…MMGL, LMML…GYSI, LIPL…VMLS, IPTL…GVVI, YMQI…TLFI, IIAL…VLLG, MQYG…AFTA, AVLG…LLGV, and DVVA…GILG.

It belongs to the binding-protein-dependent transport system permease family. LivHM subfamily.

Its subcellular location is the cell inner membrane. In terms of biological role, component of the high affinity leucine, isoleucine, valine, transport system (LIV-I), which is operative without Na(+) and is specific for alanine and threonine, in addition to branched-chain amino acids. This chain is High-affinity branched-chain amino acid transport system permease protein BraD (braD), found in Pseudomonas aeruginosa (strain ATCC 15692 / DSM 22644 / CIP 104116 / JCM 14847 / LMG 12228 / 1C / PRS 101 / PAO1).